We begin with the raw amino-acid sequence, 154 residues long: Myoglobin (154 aa).

The Globin domain occupies 2-148 (GLSDGEWQIV…FRNDIAAKYK (147 aa)). Phosphoserine is present on serine 4. Histidine 65 contributes to the nitrite binding site. An O2-binding site is contributed by histidine 65. The residue at position 68 (threonine 68) is a Phosphothreonine. Histidine 94 contacts heme b.

This sequence belongs to the globin family. Monomeric.

Its subcellular location is the cytoplasm. It localises to the sarcoplasm. It catalyses the reaction Fe(III)-heme b-[protein] + nitric oxide + H2O = Fe(II)-heme b-[protein] + nitrite + 2 H(+). It carries out the reaction H2O2 + AH2 = A + 2 H2O. Its function is as follows. Monomeric heme protein which primary function is to store oxygen and facilitate its diffusion within muscle tissues. Reversibly binds oxygen through a pentacoordinated heme iron and enables its timely and efficient release as needed during periods of heightened demand. Depending on the oxidative conditions of tissues and cells, and in addition to its ability to bind oxygen, it also has a nitrite reductase activity whereby it regulates the production of bioactive nitric oxide. Under stress conditions, like hypoxia and anoxia, it also protects cells against reactive oxygen species thanks to its pseudoperoxidase activity. This is Myoglobin (MB) from Canis lupus familiaris (Dog).